Consider the following 303-residue polypeptide: Elongation factor Ts (303 aa).

The segment at 79–82 is involved in Mg(2+) ion dislocation from EF-Tu; it reads TDFV.

It belongs to the EF-Ts family.

Its subcellular location is the cytoplasm. In terms of biological role, associates with the EF-Tu.GDP complex and induces the exchange of GDP to GTP. It remains bound to the aminoacyl-tRNA.EF-Tu.GTP complex up to the GTP hydrolysis stage on the ribosome. The chain is Elongation factor Ts from Syntrophotalea carbinolica (strain DSM 2380 / NBRC 103641 / GraBd1) (Pelobacter carbinolicus).